We begin with the raw amino-acid sequence, 332 residues long: Isopentenyl phosphate kinase (332 aa).

Residue methionine 1 is modified to N-acetylmethionine. 18-22 contacts ATP; it reads KLGGA. Substrate is bound at residue alanine 96. Glycine 97 serves as a coordination point for ATP. Substrate-binding residues include histidine 101 and glycine 202. Residues aspartate 223, 228–233, glycine 279, and lysine 283 contribute to the ATP site; that span reads YDRPPS.

The protein belongs to the isopentenyl phosphate kinase family.

Its subcellular location is the cytoplasm. The protein resides in the cytosol. It catalyses the reaction isopentenyl phosphate + ATP = isopentenyl diphosphate + ADP. Catalyzes the formation of isopentenyl diphosphate (IPP), the universal five-carbon isoprenoid building block of all natural isoprenoids. Acts in parallel with the mevalonate (MVA) pathway and plays an important role in regulating the formation of both MVA and methylerythritol phosphate (MEP) pathway-derived terpenoid compounds by controlling the ratio of isopentenyl phosphate (IP) and dimethylallyl phosphate (DMAP) to isopentenyl diphosphate (IPP) and dimethylallyl diphosphate (DMAPP). Controls the levels of IP and DMAP that are competitive inhibitors of the farnesyl diphosphate synthase. Regulates the production of farnesyl diphosphate-derived terpenoids in the cytosol, and geranyl diphosphate-derived compounds in plastids. This chain is Isopentenyl phosphate kinase, found in Arabidopsis thaliana (Mouse-ear cress).